We begin with the raw amino-acid sequence, 322 residues long: Phosphate acetyltransferase (322 aa).

It belongs to the phosphate acetyltransferase and butyryltransferase family.

Its subcellular location is the cytoplasm. The catalysed reaction is acetyl-CoA + phosphate = acetyl phosphate + CoA. Its pathway is metabolic intermediate biosynthesis; acetyl-CoA biosynthesis; acetyl-CoA from acetate: step 2/2. The polypeptide is Phosphate acetyltransferase (pta) (Mycoplasma capricolum subsp. capricolum (strain California kid / ATCC 27343 / NCTC 10154)).